The following is a 151-amino-acid chain: Testis-expressed protein 29 (151 aa).

Topologically, residues 1-56 (MEYVLEVKNSPRHLLKQFTVCDVPLYDICDYNVSRDRCQELGCCFYEGVCYKKAVP) are extracellular. The chain crosses the membrane as a helical span at residues 57 to 77 (IYIHVFSALIVIIAGAFVITI). The Cytoplasmic portion of the chain corresponds to 78-151 (IYRVIQESRK…TITEAEETED (74 aa)). A disordered region spans residues 100–151 (KSSEKAELASSSSKLGLKPASPGPPSAGPSMKSDEDKDDVTGTITEAEETED). Over residues 107–119 (LASSSSKLGLKPA) the composition is skewed to low complexity.

It is found in the membrane. The protein is Testis-expressed protein 29 (TEX29) of Homo sapiens (Human).